Consider the following 379-residue polypeptide: Pectin lyase B (379 aa).

The N-terminal stretch at methionine 1–alanine 19 is a signal peptide. 2 disulfides stabilise this stretch: cysteine 82/cysteine 101 and cysteine 91/cysteine 225. Asparagine 128 carries N-linked (GlcNAc...) asparagine glycosylation. The active site involves arginine 255. Residues cysteine 322 and cysteine 330 are joined by a disulfide bond.

The protein belongs to the polysaccharide lyase 1 family.

The protein resides in the secreted. The enzyme catalyses Eliminative cleavage of (1-&gt;4)-alpha-D-galacturonan methyl ester to give oligosaccharides with 4-deoxy-6-O-methyl-alpha-D-galact-4-enuronosyl groups at their non-reducing ends.. Its function is as follows. Pectinolytic enzymes consist of four classes of enzymes: pectin lyase, polygalacturonase, pectin methylesterase and rhamnogalacturonase. Among pectinolytic enzymes, pectin lyase is the most important in depolymerization of pectin, since it cleaves internal glycosidic bonds of highly methylated pectins. This Emericella nidulans (strain FGSC A4 / ATCC 38163 / CBS 112.46 / NRRL 194 / M139) (Aspergillus nidulans) protein is Pectin lyase B (pelB).